We begin with the raw amino-acid sequence, 296 residues long: Glycine N-acyltransferase (296 aa).

The residue at position 16 (Lys-16) is an N6-acetyllysine; alternate. Lys-16 carries the post-translational modification N6-succinyllysine; alternate. N6-acetyllysine is present on Lys-113. N6-acetyllysine; alternate is present on residues Lys-127, Lys-141, and Lys-142. Residues Lys-127, Lys-141, and Lys-142 each carry the N6-succinyllysine; alternate modification. Lys-159 and Lys-167 each carry N6-acetyllysine. Residue Lys-169 is modified to N6-succinyllysine. N6-acetyllysine; alternate is present on residues Lys-183 and Lys-256. An N6-succinyllysine; alternate mark is found at Lys-183 and Lys-256. The residue at position 267 (Lys-267) is an N6-succinyllysine.

The protein belongs to the glycine N-acyltransferase family.

Its subcellular location is the mitochondrion. The enzyme catalyses an acyl-CoA + glycine = an N-acylglycine + CoA + H(+). It carries out the reaction benzoyl-CoA + glycine = N-benzoylglycine + CoA + H(+). Its function is as follows. Mitochondrial acyltransferase which transfers an acyl group to the N-terminus of glycine and glutamine, although much less efficiently. Can conjugate a multitude of substrates to form a variety of N-acylglycines, thereby detoxify xenobiotics, such as benzoic acid or salicylic acid, and endogenous organic acids, such as isovaleric acid. This chain is Glycine N-acyltransferase (Glyat), found in Mus musculus (Mouse).